Reading from the N-terminus, the 281-residue chain is MNLPANTALFTPSWHAELELGYGRFDDCTRPTQRRHKGPLRVQKHLYAEGPQVCQHIIVHPPGGIAGGDRLDISATVGADAWAQLTSPGAAKWYRAASPAFQQLELHVQPGATLEWLPQETIVFSNAQAELTTRIELHGDAKLCYWDVVALGRPASGERFEQGHFQSHLDIRRDGTLLWHERQRIIGGDGLLDSPIGLDGKTVFATLLLTGEVSSDLLEACRSLSMPNPVRGDLTQLPGLVVARCLADEALHARAWLIQIWKYLRPALLGRQAVTPRIWNT.

Belongs to the UreD family. In terms of assembly, ureD, UreF and UreG form a complex that acts as a GTP-hydrolysis-dependent molecular chaperone, activating the urease apoprotein by helping to assemble the nickel containing metallocenter of UreC. The UreE protein probably delivers the nickel.

Its subcellular location is the cytoplasm. Functionally, required for maturation of urease via the functional incorporation of the urease nickel metallocenter. In Pseudomonas savastanoi pv. phaseolicola (strain 1448A / Race 6) (Pseudomonas syringae pv. phaseolicola (strain 1448A / Race 6)), this protein is Urease accessory protein UreD.